Reading from the N-terminus, the 154-residue chain is Ribonuclease H (154 aa).

The 142-residue stretch at 1–142 (MRKQVEIFTD…CDELARAAAG (142 aa)) folds into the RNase H type-1 domain. Positions 10, 48, 70, and 134 each coordinate Mg(2+).

It belongs to the RNase H family. As to quaternary structure, monomer. Mg(2+) serves as cofactor.

It is found in the cytoplasm. The catalysed reaction is Endonucleolytic cleavage to 5'-phosphomonoester.. Endonuclease that specifically degrades the RNA of RNA-DNA hybrids. This is Ribonuclease H from Pectobacterium carotovorum subsp. carotovorum (strain PC1).